Reading from the N-terminus, the 65-residue chain is Large ribosomal subunit protein uL29 (65 aa).

It belongs to the universal ribosomal protein uL29 family.

In Buchnera aphidicola subsp. Acyrthosiphon pisum (strain 5A), this protein is Large ribosomal subunit protein uL29.